The sequence spans 699 residues: Large T antigen (699 aa).

Met-1 bears the N-acetylmethionine; by host mark. The region spanning 12-75 is the J domain; it reads ELMDLLGLER…VKVAHQPDFG (64 aa). An LXCXE motif motif is present at residues 105–109; that stretch reads LFCHE. 3 positions are modified to phosphoserine; by host: Ser-114, Ser-122, and Ser-125. Residues 115-137 are disordered; the sequence is DEEGTADSQHSTPPKKKRKVEDP. A Phosphothreonine; by host modification is found at Thr-126. Positions 127–134 match the Nuclear localization signal motif; sequence PPKKKRKV. The T-ag OBD DNA-binding region spans 141-256; that stretch reads PPDLHAFLSQ…EESIQGGLKE (116 aa). Residues 267-359 form a T-ag D1-type zinc finger; sequence TKQVSWKLIT…KRVDTLHMTR (93 aa). Residues Cys-304, Cys-307, His-315, and His-319 each contribute to the Zn(2+) site. Positions 402–562 constitute an SF3 helicase domain; it reads KMDTLIYDFL…IYLRKALNNS (161 aa). Residue 428-435 participates in ATP binding; the sequence is GPIDSGKT. Residues 637 to 678 form a disordered region; that stretch reads ETEDSGHGSSTESQSQCFSQASDTSGSADAPASQTPDPYDHD. The span at 643 to 672 shows a compositional bias: polar residues; it reads HGSSTESQSQCFSQASDTSGSADAPASQTP. Ser-661 is modified (phosphoserine; by host). N6-acetyllysine; by host is present on Lys-691. Thr-695 carries the post-translational modification Phosphothreonine; by host.

Forms homohexamers in the presence of ATP. Interacts with host HDAC1. Interacts (via LXCXE domain) with host RB1; the interaction induces the aberrant dissociation of RB1-E2F1 complex thereby disrupting RB1's activity. Interacts (via LXCXE domain) with host pRB-related proteins RBL1 and RBL2. Interacts (via C-terminus) with host TOP1 and POLA1 allowing DNA replication. Interacts with host TP53, inhibiting TP53 binding to DNA. Interacts with host preinitiation complex components TBP, TFIIA and TFIID to regulate transcription initiation. Mg(2+) serves as cofactor. In terms of processing, phosphorylated on both serine and threonine residues. Small t antigen inhibits the dephosphorylation by the AC form of PP2A. O-Glycosylated near the C-terminal region. Post-translationally, acetylated by CBP in a TP53-dependent manner.

The protein localises to the host nucleus. The enzyme catalyses Couples ATP hydrolysis with the unwinding of duplex DNA by translocating in the 3'-5' direction.. It carries out the reaction ATP + H2O = ADP + phosphate + H(+). Its function is as follows. Isoform large T antigen is a key early protein essential for both driving viral replication and inducing cellular transformation. Plays a role in viral genome replication by driving entry of quiescent cells into the cell cycle and by autoregulating the synthesis of viral early mRNA. Displays highly oncogenic activities by corrupting the host cellular checkpoint mechanisms that guard cell division and the transcription, replication, and repair of DNA. Participates in the modulation of cellular gene expression preceeding viral DNA replication. This step involves binding to host key cell cycle regulators retinoblastoma protein RB1/pRb and TP53. Induces the disassembly of host E2F1 transcription factors from RB1, thus promoting transcriptional activation of E2F1-regulated S-phase genes. Inhibits host TP53 binding to DNA, abrogating the ability of TP53 to stimulate gene expression. Plays the role of a TFIID-associated factor (TAF) in transcription initiation for all three RNA polymerases, by stabilizing the TBP-TFIIA complex on promoters. Initiates viral DNA replication and unwinding via interactions with the viral origin of replication. Binds two adjacent sites in the SV40 origin. The replication fork movement is facilitated by Large T antigen helicase activity. Has processive 3'-5' DNA helicase activity which requires a short 3' single-stranded region and ATP. Activates the transcription of viral late mRNA, through host TBP and TFIIA stabilization. Interferes with histone deacetylation mediated by HDAC1, leading to activation of transcription. The polypeptide is Large T antigen (Papio hamadryas ursinus (Chacma baboon)).